The chain runs to 250 residues: Small ribosomal subunit protein uS2 (250 aa).

Belongs to the universal ribosomal protein uS2 family.

The chain is Small ribosomal subunit protein uS2 from Paraburkholderia xenovorans (strain LB400).